The sequence spans 470 residues: Sorting nexin-17 (470 aa).

A PX domain is found at 1 to 109; that stretch reads MHFSIPETES…SFLRRAQQET (109 aa). Positions 36, 38, 62, and 75 each coordinate a 1,2-diacyl-sn-glycero-3-phospho-(1D-myo-inositol-3-phosphate). In terms of domain architecture, Ras-associating spans 115-206; the sequence is EEVSLEVLLS…YKIVLRKSYW (92 aa). The interval 115 to 432 is FERM-like; that stretch reads EEVSLEVLLS…DASRESMVKL (318 aa). The interval 270 to 432 is PTB-like F3 module; that stretch reads GYLRFDACVA…DASRESMVKL (163 aa). A phosphoserine mark is found at Ser-336, Ser-407, Ser-409, Ser-415, Ser-421, Ser-437, and Ser-440. Residues 401 to 426 form a disordered region; the sequence is GGTLRRSDSQQAVKSPPLLESPDASR.

The protein belongs to the sorting nexin family. In terms of assembly, monomer. Interacts with APP (via cytoplasmic YXNPXY motif). Interacts with KIF1B. Interacts with the C-termini of P-selectin, PTC, LDLR, VLDLR, LRP1 and LRP8. Interacts with KRIT1 (via N-terminus). Interacts with HRAS. Interacts with ITGB1 and ITGB5 (via NPxY motif). Interacts with CCDC22 and CCDC93; the interaction associates SNX17 with the CCC complex. Interacts (via C-terminus) with VPS26C and VPS35L; the interactions are direct and associate SNX17 with the retriever complex. As to expression, detected in brain neurons (at protein level). Broadly expressed, with highest levels in brain and placenta, and lowest levels in colon, intestine and liver.

Its subcellular location is the cytoplasm. It is found in the early endosome. The protein resides in the cytoplasmic vesicle membrane. Critical regulator of endosomal recycling of numerous surface proteins, including integrins, signaling receptor and channels. Binds to NPxY sequences in the cytoplasmic tails of target cargos. Associates with retriever and CCC complexes to prevent lysosomal degradation and promote cell surface recycling of numerous cargos such as integrins ITGB1, ITGB5 and their associated alpha subunits. Also required for maintenance of normal cell surface levels of APP and LRP1. Interacts with membranes containing phosphatidylinositol 3-phosphate (PtdIns(3P)). The polypeptide is Sorting nexin-17 (Snx17) (Mus musculus (Mouse)).